The following is a 236-amino-acid chain: NAD-dependent protein deacetylase (236 aa).

Residues 1-236 (MIKDWLQESN…EFLRSISNEG (236 aa)) enclose the Deacetylase sirtuin-type domain. NAD(+) is bound by residues A18, T22, F29, R30, Q96, V98, D99, and H114. Position 29 (F29) interacts with nicotinamide. Residues V98 and D99 each coordinate nicotinamide. The active-site Proton acceptor is the H114. Residues C122, C125, C141, and C143 each coordinate Zn(2+). The NAD(+) site is built by S181, S182, N206, and I225.

The protein belongs to the sirtuin family. Class U subfamily. It depends on Zn(2+) as a cofactor.

It localises to the cytoplasm. The catalysed reaction is N(6)-acetyl-L-lysyl-[protein] + NAD(+) + H2O = 2''-O-acetyl-ADP-D-ribose + nicotinamide + L-lysyl-[protein]. NAD-dependent protein deacetylase which modulates the activities of several enzymes which are inactive in their acetylated form. This is NAD-dependent protein deacetylase from Oceanobacillus iheyensis (strain DSM 14371 / CIP 107618 / JCM 11309 / KCTC 3954 / HTE831).